Here is a 269-residue protein sequence, read N- to C-terminus: Eukaryotic translation initiation factor 3 subunit G-1 (269 aa).

The region spanning 188–266 (AAIRISNLSE…LILSVEWSKP (79 aa)) is the RRM domain.

The protein belongs to the eIF-3 subunit G family. As to quaternary structure, component of the eukaryotic translation initiation factor 3 (eIF-3) complex. The eIF-3 complex interacts with pix.

The protein resides in the cytoplasm. Its function is as follows. RNA-binding component of the eukaryotic translation initiation factor 3 (eIF-3) complex, which is involved in protein synthesis of a specialized repertoire of mRNAs and, together with other initiation factors, stimulates binding of mRNA and methionyl-tRNAi to the 40S ribosome. The eIF-3 complex specifically targets and initiates translation of a subset of mRNAs involved in cell proliferation. This subunit can bind 18S rRNA. The sequence is that of Eukaryotic translation initiation factor 3 subunit G-1 from Drosophila grimshawi (Hawaiian fruit fly).